Here is an 87-residue protein sequence, read N- to C-terminus: Bradykinin-potentiating peptide NDBP12 (87 aa).

The N-terminal stretch at 1 to 22 is a signal peptide; sequence MNKRVLLVIFFVTLLVADEVNS. The segment covering 64–75 has biased composition (low complexity); it reads PAEAPAPAAAAP. The tract at residues 64–87 is disordered; sequence PAEAPAPAAAAPEEPPVEQRRRRR.

It belongs to the non-disulfide-bridged peptide (NDBP) superfamily. Long chain multifunctional peptide (group 2) family. Expressed by the venom gland.

The protein resides in the secreted. Its function is as follows. Inhibits angiotensin-converting enzyme (ACE), but does not serve as substrate for the enzyme. Potentiates bradykinin (BK) on the isolated guinea pig ileum as well as the isolated rat uterus for contraction. Also potentiates in vivo the depressor effect of BK on arterial blood pressure in the normotensive anesthetized rat. The chain is Bradykinin-potentiating peptide NDBP12 from Lychas mucronatus (Chinese swimming scorpion).